We begin with the raw amino-acid sequence, 40 residues long: Beta-glucosidase 1 (40 aa).

It catalyses the reaction Hydrolysis of terminal, non-reducing beta-D-glucosyl residues with release of beta-D-glucose.. This chain is Beta-glucosidase 1, found in Passalora fulva (Tomato leaf mold).